The sequence spans 506 residues: Maturase K (506 aa).

It belongs to the intron maturase 2 family. MatK subfamily.

Its subcellular location is the plastid. It is found in the chloroplast. Its function is as follows. Usually encoded in the trnK tRNA gene intron. Probably assists in splicing its own and other chloroplast group II introns. In Andromeda polifolia (Bog rosemary), this protein is Maturase K.